The following is a 268-amino-acid chain: 1D-myo-inositol 2-acetamido-2-deoxy-alpha-D-glucopyranoside deacetylase (268 aa).

Residues histidine 7, aspartate 10, and histidine 142 each coordinate Zn(2+).

It belongs to the MshB deacetylase family. Requires Zn(2+) as cofactor.

The enzyme catalyses 1D-myo-inositol 2-acetamido-2-deoxy-alpha-D-glucopyranoside + H2O = 1D-myo-inositol 2-amino-2-deoxy-alpha-D-glucopyranoside + acetate. Catalyzes the deacetylation of 1D-myo-inositol 2-acetamido-2-deoxy-alpha-D-glucopyranoside (GlcNAc-Ins) in the mycothiol biosynthesis pathway. This Saccharomonospora viridis (strain ATCC 15386 / DSM 43017 / JCM 3036 / CCUG 5913 / NBRC 12207 / NCIMB 9602 / P101) (Thermoactinomyces viridis) protein is 1D-myo-inositol 2-acetamido-2-deoxy-alpha-D-glucopyranoside deacetylase.